Reading from the N-terminus, the 1241-residue chain is RNA polymerase II C-terminal domain phosphatase-like 3 (1241 aa).

7 disordered regions span residues 361-402 (DHDA…TTEG), 428-470 (VFKT…HLIY), 505-525 (ISAP…RDPR), 578-598 (KRQK…WLED), 677-702 (AIQK…VSTP), 720-800 (VLQD…QNGT), and 852-885 (TERD…GPTR). The span at 368–378 (PSPTRETTPSL) shows a compositional bias: polar residues. Residues 441–466 (GEPNDGNGDVGGEVSSSVVKSSNPGS) show a composition bias toward low complexity. A compositionally biased stretch (basic and acidic residues) spans 677 to 686 (AIQKPMDPRR). 2 stretches are compositionally biased toward polar residues: residues 691–702 (PGSSVQPGVSTP) and 791–800 (PRQNISQNGT). The segment covering 871–881 (SVSAASVTAAA) has biased composition (low complexity). The FCP1 homology domain occupies 923 to 1103 (FASQKLSLVL…GLLGPSLLEL (181 aa)). The 94-residue stretch at 1146-1239 (EQRKILAGCR…QRANENLYAI (94 aa)) folds into the BRCT domain.

As to quaternary structure, interacts with RAP74. Requires Mg(2+) as cofactor. Co(2+) serves as cofactor. It depends on Mn(2+) as a cofactor.

Its subcellular location is the nucleus. The catalysed reaction is O-phospho-L-seryl-[protein] + H2O = L-seryl-[protein] + phosphate. It carries out the reaction O-phospho-L-threonyl-[protein] + H2O = L-threonyl-[protein] + phosphate. In terms of biological role, completely dephosphorylates 'Ser-2', and partially 'Ser-5' and 'Ser-7' of the heptad repeats YSPTSPS in the C-terminal domain (CTD) of the largest RNA polymerase II subunit (RPB1). Involved in defense response. Acts as a negative regulator of immune gene expression and immunity to pathogen infections. Preferentially dephosphorylates 'Ser-2' of RNA polymerase II CTD. This counterregulates the MAP kinase (MAPK) or cyclin-dependent kinase C (CDKC)-mediated phosphorylation of CTD in response to pathogens and upon perception of microbe-associated molecular patterns (MAMPs). MAPKs phosphorylate and activate CDKCs, which are CTD kinases that positively regulate plant innate immunity. Acts as a negative regulator of stress gene transcription involved in abscisic acid (ABA) mediated signaling pathway and cold resistance. Acts as a post-transcriptional gene silencing (PTGS) suppressor. The protein is RNA polymerase II C-terminal domain phosphatase-like 3 of Arabidopsis thaliana (Mouse-ear cress).